The following is a 475-amino-acid chain: B-type cell cycle switch protein ccs52A (475 aa).

Residues 1 to 29 (MDGTGNRNPPPTSTVGDNSPPPEPSPESL) form a disordered region. The short motif at 7–28 (RNPPPTSTVGDNSPPPEPSPES) is the PEST motif element. Phosphoserine is present on residues S43 and S45. The C-box signature appears at 51–57 (DRFIPSR). Positions 80–91 (AYTTLLRTALFG) match the CSM motif motif. Residue T99 is modified to Phosphothreonine. S144 and S155 each carry phosphoserine. 7 WD repeats span residues 166–203 (QDDFYLNLVDWSSHNVLAVGLGNCVYLWNACSSKVTKL), 207–246 (GVDDCVCSVGWAQRGTHLAVGTNNGKVQIWDAARCKKIRS), 249–289 (GHRL…SKLS), 290–329 (GHKSEVCGLKWSYDNRELASGGNDNKLFVWNQHSTQPVLK), 332–374 (EHTA…HLSC), 376–417 (DTGS…KLAT), and 420–459 (GHTYRVLYLAISPDGQTIVTGAGDETLRFWNVFPSPKSQN). S454 carries the post-translational modification Phosphoserine.

Belongs to the WD repeat CDC20/Fizzy family. In terms of tissue distribution, mostly expressed in nodules, and, to a lower extent, in root tips, stems, hypocotyls, leaves, flower buds and flowers.

It is found in the nucleus. It participates in protein modification; protein ubiquitination. Its function is as follows. Component of the anaphase promoting complex/cyclosome (APC/C), a cell cycle-regulated E3 ubiquitin-protein ligase complex that controls progression through mitosis and the G1 phase of the cell cycle. Required to switch form cell proliferation to cell differentiation, endoreduplication and ploidy-dependent cell enlargement, including during nodulation, before nodule differentiation. Involved in root-knot nematode Meloidogyne incognita giant cells formation. The protein is B-type cell cycle switch protein ccs52A of Medicago truncatula (Barrel medic).